The primary structure comprises 366 residues: Eukaryotic translation initiation factor 3 subunit H (366 aa).

In terms of domain architecture, MPN spans 12-161 (VKVEALVVMK…LRAFRLSPKF (150 aa)).

This sequence belongs to the eIF-3 subunit H family. In terms of assembly, component of the eukaryotic translation initiation factor 3 (eIF-3) complex.

It localises to the cytoplasm. Functionally, component of the eukaryotic translation initiation factor 3 (eIF-3) complex, which is involved in protein synthesis of a specialized repertoire of mRNAs and, together with other initiation factors, stimulates binding of mRNA and methionyl-tRNAi to the 40S ribosome. The eIF-3 complex specifically targets and initiates translation of a subset of mRNAs involved in cell proliferation. The chain is Eukaryotic translation initiation factor 3 subunit H from Emericella nidulans (strain FGSC A4 / ATCC 38163 / CBS 112.46 / NRRL 194 / M139) (Aspergillus nidulans).